The sequence spans 240 residues: Adenosylcobinamide-GDP ribazoletransferase (240 aa).

5 helical membrane passes run 31 to 51 (LLYY…ASHL), 57 to 77 (APLH…ALHL), 109 to 129 (IAVV…WVLV), 133 to 153 (VGAQ…GLFL), and 185 to 205 (LFCL…FAWL).

Belongs to the CobS family. Mg(2+) serves as cofactor.

The protein localises to the cell inner membrane. It catalyses the reaction alpha-ribazole + adenosylcob(III)inamide-GDP = adenosylcob(III)alamin + GMP + H(+). The enzyme catalyses alpha-ribazole 5'-phosphate + adenosylcob(III)inamide-GDP = adenosylcob(III)alamin 5'-phosphate + GMP + H(+). It functions in the pathway cofactor biosynthesis; adenosylcobalamin biosynthesis; adenosylcobalamin from cob(II)yrinate a,c-diamide: step 7/7. Joins adenosylcobinamide-GDP and alpha-ribazole to generate adenosylcobalamin (Ado-cobalamin). Also synthesizes adenosylcobalamin 5'-phosphate from adenosylcobinamide-GDP and alpha-ribazole 5'-phosphate. The polypeptide is Adenosylcobinamide-GDP ribazoletransferase (Pseudomonas putida (strain GB-1)).